Here is a 783-residue protein sequence, read N- to C-terminus: Transcription factor E4F1 (783 aa).

The interval 40 to 84 is required for ubiquitin ligase activity; the sequence is GFLGLPAPFSEEDEDDVHRCGRCQVEFTALEDFVQHKIQKTCHRA. Residue S49 is modified to Phosphoserine. Positions 185-264 are mediates dimerization, DNA-binding, transcription repression of CCNA2 and interaction with HMGA2; it reads LLVNKEGRYV…GKSFRESGAL (80 aa). 2 C2H2-type zinc fingers span residues 193 to 215 and 221 to 243; these read YVCM…MVTH and HECK…HRRH. A C2H2-type 3; degenerate zinc finger spans residues 249–273; the sequence is YKCAKCGKSFRESGALTRHLKSLTP. The mediates interaction with CDKN2A stretch occupies residues 368-565; the sequence is NLLHQAMQNS…REKGSLVRHV (198 aa). Residues 386–407 form a disordered region; that stretch reads GEESALEPAPPSGSSPQCLGDG. 5 C2H2-type zinc fingers span residues 434–456, 462–484, 490–512, 518–540, and 546–568; these read HPCP…KRGH, FTCT…QEVH, FRCG…RRVH, FPCP…FRTH, and HVCQ…VRHH. The tract at residues 434–598 is interaction with BMI1; it reads HPCPQCSETF…LNRHLRTKGG (165 aa). The tract at residues 520–579 is mediates interaction with TP53; that stretch reads CPQCGKRYKTKNAQQVHFRTHLEEKPHVCQFCSRGFREKGSLVRHVRHHTGEKPFKCYKC. Residues 574–596 form a C2H2-type 9; degenerate zinc finger; it reads FKCYKCGRGFAEHGTLNRHLRTK. The interval 574–596 is mediates interaction with RASSF1; the sequence is FKCYKCGRGFAEHGTLNRHLRTK.

As to quaternary structure, homodimer; binds DNA as a dimer. Forms a complex with CDKN2A and TP53. Interacts with HDAC1, HMGA2 and RASSF1. Interactions with TP53, RB1, ANP32A and probably BMI1 and FHL2 regulate E4F1 activity. In terms of processing, phosphorylated; phosphorylation is cell cycle-dependent and regulates DNA-binding activity and function. May be sumoylated by UBE2I upon interaction with CDKN2A. As to expression, ubiquitously expressed.

The protein resides in the nucleus. It is found in the nucleoplasm. Its subcellular location is the cytoplasm. The catalysed reaction is S-ubiquitinyl-[E2 ubiquitin-conjugating enzyme]-L-cysteine + [acceptor protein]-L-lysine = [E2 ubiquitin-conjugating enzyme]-L-cysteine + N(6)-ubiquitinyl-[acceptor protein]-L-lysine.. It participates in protein modification; protein ubiquitination. Functionally, may function as a transcriptional repressor. May also function as a ubiquitin ligase mediating ubiquitination of chromatin-associated TP53. Functions in cell survival and proliferation through control of the cell cycle. Functions in the p53 and pRB tumor suppressor pathways and regulates the cyclin CCNA2 transcription. This Mus musculus (Mouse) protein is Transcription factor E4F1 (E4f1).